Reading from the N-terminus, the 490-residue chain is Inosine-5'-monophosphate dehydrogenase (490 aa).

2 CBS domains span residues 96 to 154 (MIIN…SKPV) and 158 to 218 (MTKE…CKDE). NAD(+)-binding positions include D252 and 302 to 304 (GVG). Residues G304 and G306 each coordinate K(+). S307 provides a ligand contact to IMP. C309 is a K(+) binding site. C309 acts as the Thioimidate intermediate in catalysis. Residues 342–344 (DGG), 365–366 (GN), and 389–393 (YRGMG) each bind IMP. R406 functions as the Proton acceptor in the catalytic mechanism. E418 provides a ligand contact to IMP. E472, S473, and H474 together coordinate K(+).

Belongs to the IMPDH/GMPR family. In terms of assembly, homotetramer. K(+) serves as cofactor.

The catalysed reaction is IMP + NAD(+) + H2O = XMP + NADH + H(+). It functions in the pathway purine metabolism; XMP biosynthesis via de novo pathway; XMP from IMP: step 1/1. With respect to regulation, mycophenolic acid (MPA) is a non-competitive inhibitor that prevents formation of the closed enzyme conformation by binding to the same site as the amobile flap. In contrast, mizoribine monophosphate (MZP) is a competitive inhibitor that induces the closed conformation. MPA is a potent inhibitor of mammalian IMPDHs but a poor inhibitor of the bacterial enzymes. MZP is a more potent inhibitor of bacterial IMPDH. Functionally, catalyzes the conversion of inosine 5'-phosphate (IMP) to xanthosine 5'-phosphate (XMP), the first committed and rate-limiting step in the de novo synthesis of guanine nucleotides, and therefore plays an important role in the regulation of cell growth. This is Inosine-5'-monophosphate dehydrogenase from Aquifex aeolicus (strain VF5).